The following is a 352-amino-acid chain: tRNA N6-adenosine threonylcarbamoyltransferase (352 aa).

2 residues coordinate Fe cation: His115 and His119. Residues 137-141, Asp170, Gly183, and Asn281 contribute to the substrate site; that span reads LVSGG. A Fe cation-binding site is contributed by Asp309.

This sequence belongs to the KAE1 / TsaD family. The cofactor is Fe(2+).

It localises to the cytoplasm. It carries out the reaction L-threonylcarbamoyladenylate + adenosine(37) in tRNA = N(6)-L-threonylcarbamoyladenosine(37) in tRNA + AMP + H(+). Functionally, required for the formation of a threonylcarbamoyl group on adenosine at position 37 (t(6)A37) in tRNAs that read codons beginning with adenine. Is involved in the transfer of the threonylcarbamoyl moiety of threonylcarbamoyl-AMP (TC-AMP) to the N6 group of A37, together with TsaE and TsaB. TsaD likely plays a direct catalytic role in this reaction. This Methylocapsa acidiphila protein is tRNA N6-adenosine threonylcarbamoyltransferase.